Consider the following 470-residue polypeptide: Ribulose bisphosphate carboxylase large chain (470 aa).

Residues Asn-115 and Thr-165 each contribute to the substrate site. The Proton acceptor role is filled by Lys-167. Lys-169 contacts substrate. The Mg(2+) site is built by Lys-193, Asp-195, and Glu-196. Position 193 is an N6-carboxylysine (Lys-193). Residue His-286 is the Proton acceptor of the active site. Substrate contacts are provided by Arg-287, His-319, and Ser-371.

This sequence belongs to the RuBisCO large chain family. Type I subfamily. In terms of assembly, heterohexadecamer of 8 large chains and 8 small chains. It depends on Mg(2+) as a cofactor.

The protein localises to the carboxysome. The enzyme catalyses 2 (2R)-3-phosphoglycerate + 2 H(+) = D-ribulose 1,5-bisphosphate + CO2 + H2O. It carries out the reaction D-ribulose 1,5-bisphosphate + O2 = 2-phosphoglycolate + (2R)-3-phosphoglycerate + 2 H(+). Functionally, ruBisCO catalyzes two reactions: the carboxylation of D-ribulose 1,5-bisphosphate, the primary event in carbon dioxide fixation, as well as the oxidative fragmentation of the pentose substrate in the photorespiration process. Both reactions occur simultaneously and in competition at the same active site. The sequence is that of Ribulose bisphosphate carboxylase large chain from Prochlorococcus marinus (strain NATL1A).